A 119-amino-acid polypeptide reads, in one-letter code: Large ribosomal subunit protein bL20 (119 aa).

Belongs to the bacterial ribosomal protein bL20 family.

Functionally, binds directly to 23S ribosomal RNA and is necessary for the in vitro assembly process of the 50S ribosomal subunit. It is not involved in the protein synthesizing functions of that subunit. The protein is Large ribosomal subunit protein bL20 of Bradyrhizobium diazoefficiens (strain JCM 10833 / BCRC 13528 / IAM 13628 / NBRC 14792 / USDA 110).